The primary structure comprises 349 residues: Phosphoribosylformylglycinamidine cyclo-ligase (349 aa).

This sequence belongs to the AIR synthase family.

It is found in the cytoplasm. It catalyses the reaction 2-formamido-N(1)-(5-O-phospho-beta-D-ribosyl)acetamidine + ATP = 5-amino-1-(5-phospho-beta-D-ribosyl)imidazole + ADP + phosphate + H(+). Its pathway is purine metabolism; IMP biosynthesis via de novo pathway; 5-amino-1-(5-phospho-D-ribosyl)imidazole from N(2)-formyl-N(1)-(5-phospho-D-ribosyl)glycinamide: step 2/2. In Psychrobacter cryohalolentis (strain ATCC BAA-1226 / DSM 17306 / VKM B-2378 / K5), this protein is Phosphoribosylformylglycinamidine cyclo-ligase.